Here is a 145-residue protein sequence, read N- to C-terminus: uncharacterized protein (145 aa).

Positions 95–119 are disordered; it reads YVDSTSRTPSAKKDMQGLSVSEKQT.

This is an uncharacterized protein from Treponema pallidum (strain Nichols).